The chain runs to 132 residues: Small ribosomal subunit protein uS8 (132 aa).

This sequence belongs to the universal ribosomal protein uS8 family. As to quaternary structure, part of the 30S ribosomal subunit. Contacts proteins S5 and S12.

Functionally, one of the primary rRNA binding proteins, it binds directly to 16S rRNA central domain where it helps coordinate assembly of the platform of the 30S subunit. This Mycolicibacterium gilvum (strain PYR-GCK) (Mycobacterium gilvum (strain PYR-GCK)) protein is Small ribosomal subunit protein uS8.